A 337-amino-acid polypeptide reads, in one-letter code: Phosphate acyltransferase (337 aa).

It belongs to the PlsX family. As to quaternary structure, homodimer. Probably interacts with PlsY.

It localises to the cytoplasm. It catalyses the reaction a fatty acyl-[ACP] + phosphate = an acyl phosphate + holo-[ACP]. It functions in the pathway lipid metabolism; phospholipid metabolism. Its function is as follows. Catalyzes the reversible formation of acyl-phosphate (acyl-PO(4)) from acyl-[acyl-carrier-protein] (acyl-ACP). This enzyme utilizes acyl-ACP as fatty acyl donor, but not acyl-CoA. The polypeptide is Phosphate acyltransferase (Latilactobacillus sakei subsp. sakei (strain 23K) (Lactobacillus sakei subsp. sakei)).